The primary structure comprises 155 residues: Small ribosomal subunit protein uS9 (155 aa).

It belongs to the universal ribosomal protein uS9 family.

The protein is Small ribosomal subunit protein uS9 of Rhizobium leguminosarum bv. trifolii (strain WSM2304).